The chain runs to 288 residues: Proteasome assembly chaperone 1 (288 aa).

The residue at position 2 (A2) is an N-acetylalanine. The interval 13-35 is disordered; sequence PCRAGTEDEEEEEEGRRETPEDR. Phosphothreonine is present on T18. Over residues 26–35 the composition is skewed to basic and acidic residues; that stretch reads EGRRETPEDR. T54 is subject to Phosphothreonine. S180 is modified (phosphoserine). K264 is subject to N6-acetyllysine.

The protein belongs to the PSMG1 family. Forms a heterodimer with PSMG2. The PSMG1-PSMG2 heterodimer interacts directly with the PSMA5 and PSMA7 proteasome alpha subunits. In terms of processing, degraded by the proteasome upon completion of 20S proteasome maturation. As to expression, in the adult, detected in brain, colon, leukocytes, breast and testis. Widely expressed in the fetus. Also expressed in a variety of proliferating cell lines.

The protein localises to the cytoplasm. It localises to the endoplasmic reticulum. Chaperone protein which promotes assembly of the 20S proteasome as part of a heterodimer with PSMG2. The PSMG1-PSMG2 heterodimer binds to the PSMA5 and PSMA7 proteasome subunits, promotes assembly of the proteasome alpha subunits into the heteroheptameric alpha ring and prevents alpha ring dimerization. The polypeptide is Proteasome assembly chaperone 1 (Homo sapiens (Human)).